Here is a 349-residue protein sequence, read N- to C-terminus: Phenylalanine--tRNA ligase alpha subunit (349 aa).

Position 258 (glutamate 258) interacts with Mg(2+).

This sequence belongs to the class-II aminoacyl-tRNA synthetase family. Phe-tRNA synthetase alpha subunit type 1 subfamily. Tetramer of two alpha and two beta subunits. Mg(2+) is required as a cofactor.

Its subcellular location is the cytoplasm. It catalyses the reaction tRNA(Phe) + L-phenylalanine + ATP = L-phenylalanyl-tRNA(Phe) + AMP + diphosphate + H(+). The chain is Phenylalanine--tRNA ligase alpha subunit from Rickettsia felis (strain ATCC VR-1525 / URRWXCal2) (Rickettsia azadi).